The following is a 346-amino-acid chain: Phenylalanine--tRNA ligase alpha subunit (346 aa).

Mg(2+) is bound at residue glutamate 258.

Belongs to the class-II aminoacyl-tRNA synthetase family. Phe-tRNA synthetase alpha subunit type 1 subfamily. As to quaternary structure, tetramer of two alpha and two beta subunits. Mg(2+) is required as a cofactor.

The protein resides in the cytoplasm. It catalyses the reaction tRNA(Phe) + L-phenylalanine + ATP = L-phenylalanyl-tRNA(Phe) + AMP + diphosphate + H(+). This is Phenylalanine--tRNA ligase alpha subunit from Protochlamydia amoebophila (strain UWE25).